Reading from the N-terminus, the 321-residue chain is Glucokinase (321 aa).

8–13 (GDVGGT) contributes to the ATP binding site.

Belongs to the bacterial glucokinase family.

It is found in the cytoplasm. It catalyses the reaction D-glucose + ATP = D-glucose 6-phosphate + ADP + H(+). The polypeptide is Glucokinase (Shigella sonnei (strain Ss046)).